We begin with the raw amino-acid sequence, 602 residues long: Aryl hydrocarbon receptor protein 1 (602 aa).

Residues 1–2 (MY) constitute a propeptide that is removed on maturation. Positions 1–12 (MYASKRRQRNFK) are enriched in basic residues. The interval 1 to 28 (MYASKRRQRNFKRVRDPPKQLTNTNPSK) is disordered. 2 short sequence motifs (nuclear localization signal) span residues 5-8 (KRRQ) and 28-33 (KRHRER). The region spanning 18 to 71 (PKQLTNTNPSKRHRERLNGELETVAMLLPYDSSTISRLDKLSVLRLAVSFLQCK) is the bHLH domain. Required for maintaining the overall integrity of the AHR:ARNT heterodimer and its transcriptional activity stretches follow at residues 41-73 (VAMLLPYDSSTISRLDKLSVLRLAVSFLQCKAH), 133-141 (SLKSLGGFI), and 266-268 (ICV). The Nuclear export signal signature appears at 55-63 (LDKLSVLRL). The PAS domain occupies 126–196 (ESNFEEISLK…QQLDSNFHIP (71 aa)). A disordered region spans residues 440-467 (STSNSLFPSVPVPTPTTTKANRRRKENS).

In terms of assembly, interacts with daf-21/hsp90. Interacts with aha-1. Expressed in many distinct neuronal cells including RMED, RMEV, RMEL and RMER. Functions in URX neurons to promote aggregation behavior.

It is found in the nucleus. In terms of biological role, probable ligand-activated transcriptional activator. Acts as a transcriptional regulator in GABAergic motor neuron cell fate specification and development. Promotes cell-type-specific expression of guanylate cyclase genes that have key roles in aggregation behavior and hyperoxia avoidance. Has no role in carbon dioxide avoidance. The sequence is that of Aryl hydrocarbon receptor protein 1 from Caenorhabditis elegans.